A 137-amino-acid polypeptide reads, in one-letter code: Large ribosomal subunit protein uL16 (137 aa).

It belongs to the universal ribosomal protein uL16 family. In terms of assembly, part of the 50S ribosomal subunit.

Binds 23S rRNA and is also seen to make contacts with the A and possibly P site tRNAs. The polypeptide is Large ribosomal subunit protein uL16 (Streptococcus thermophilus (strain ATCC BAA-491 / LMD-9)).